A 179-amino-acid chain; its full sequence is Large ribosomal subunit protein uL6 (179 aa).

The protein belongs to the universal ribosomal protein uL6 family. As to quaternary structure, part of the 50S ribosomal subunit.

In terms of biological role, this protein binds to the 23S rRNA, and is important in its secondary structure. It is located near the subunit interface in the base of the L7/L12 stalk, and near the tRNA binding site of the peptidyltransferase center. In Leptospira biflexa serovar Patoc (strain Patoc 1 / ATCC 23582 / Paris), this protein is Large ribosomal subunit protein uL6.